A 533-amino-acid polypeptide reads, in one-letter code: Apolipoprotein N-acyltransferase (533 aa).

Helical transmembrane passes span 17 to 37 (FFLP…WPAV), 72 to 92 (LLFC…GGIL), 116 to 136 (GFRS…WAYM), 165 to 185 (GVWG…LLFM), and 190 to 210 (FQVK…PLLY). Positions 232-499 (VQPDIDPHEK…QSVLTADVPL (268 aa)) constitute a CN hydrolase domain. Glutamate 274 serves as the catalytic Proton acceptor. Residue lysine 352 is part of the active site. The active-site Nucleophile is the cysteine 410. Residues 510 to 530 (PDLVPHVCLGIAGVLALVAAV) form a helical membrane-spanning segment.

It belongs to the CN hydrolase family. Apolipoprotein N-acyltransferase subfamily.

The protein resides in the cell inner membrane. The catalysed reaction is N-terminal S-1,2-diacyl-sn-glyceryl-L-cysteinyl-[lipoprotein] + a glycerophospholipid = N-acyl-S-1,2-diacyl-sn-glyceryl-L-cysteinyl-[lipoprotein] + a 2-acyl-sn-glycero-3-phospholipid + H(+). Its pathway is protein modification; lipoprotein biosynthesis (N-acyl transfer). Catalyzes the phospholipid dependent N-acylation of the N-terminal cysteine of apolipoprotein, the last step in lipoprotein maturation. The protein is Apolipoprotein N-acyltransferase of Chlorobaculum tepidum (strain ATCC 49652 / DSM 12025 / NBRC 103806 / TLS) (Chlorobium tepidum).